Here is a 199-residue protein sequence, read N- to C-terminus: MRILLIFFVPSGILDQLFPRISILSTLRVNLTNSPLLTPNLTLYSMVNGFDFSKMFGRKDPELVSKEVKQYNERRFKQMALFYGFTVATFICSKIAYRGVIKRRYVPNYYQHNHVAPPFSFYRDALSAVFHSTSLAITSLGMASTGVLWYYDISSVAEFSFKLKQALGGHDKEQELKKLPEDETVQEIQNSINSYLGDR.

Transmembrane regions (helical) follow at residues 79–101 (MALFYGFTVATFICSKIAYRGVI) and 129–151 (VFHSTSLAITSLGMASTGVLWYY).

This sequence belongs to the AIM11 family.

It is found in the membrane. This is Altered inheritance of mitochondria protein 11 (AIM11) from Komagataella phaffii (strain GS115 / ATCC 20864) (Yeast).